The following is a 130-amino-acid chain: Small ribosomal subunit protein uS11 (130 aa).

It belongs to the universal ribosomal protein uS11 family. Part of the 30S ribosomal subunit. Interacts with proteins S7 and S18. Binds to IF-3.

Its function is as follows. Located on the platform of the 30S subunit, it bridges several disparate RNA helices of the 16S rRNA. Forms part of the Shine-Dalgarno cleft in the 70S ribosome. In Prochlorococcus marinus (strain MIT 9313), this protein is Small ribosomal subunit protein uS11.